A 358-amino-acid polypeptide reads, in one-letter code: Alanine racemase (358 aa).

Residue lysine 35 is the Proton acceptor; specific for D-alanine of the active site. At lysine 35 the chain carries N6-(pyridoxal phosphate)lysine. Residue arginine 130 participates in substrate binding. Tyrosine 255 (proton acceptor; specific for L-alanine) is an active-site residue. Methionine 303 is a substrate binding site.

Belongs to the alanine racemase family. Pyridoxal 5'-phosphate is required as a cofactor.

The enzyme catalyses L-alanine = D-alanine. It functions in the pathway amino-acid biosynthesis; D-alanine biosynthesis; D-alanine from L-alanine: step 1/1. Catalyzes the interconversion of L-alanine and D-alanine. May also act on other amino acids. The sequence is that of Alanine racemase (alr) from Shewanella baltica (strain OS185).